We begin with the raw amino-acid sequence, 367 residues long: D-alanine--D-alanine ligase (367 aa).

Positions 141 to 346 (KNLFAQAGLR…YPELIERLIA (206 aa)) constitute an ATP-grasp domain. Residue 174–229 (ERELGYPCFVKPANAGSSVGISKCKQRGDLKAAFIEAFQYDRKIIIEEAIVGREIE) coordinates ATP. The Mg(2+) site is built by aspartate 300, glutamate 313, and asparagine 315.

The protein belongs to the D-alanine--D-alanine ligase family. The cofactor is Mg(2+). Requires Mn(2+) as cofactor.

The protein resides in the cytoplasm. The catalysed reaction is 2 D-alanine + ATP = D-alanyl-D-alanine + ADP + phosphate + H(+). Its pathway is cell wall biogenesis; peptidoglycan biosynthesis. Its function is as follows. Cell wall formation. The protein is D-alanine--D-alanine ligase of Geobacillus kaustophilus (strain HTA426).